A 414-amino-acid chain; its full sequence is WW domain-containing oxidoreductase (414 aa).

A disordered region spans residues 1-23 (MAALKYAGLEDTDSEEELPPGWE). The 34-residue stretch at 16-49 (EELPPGWEERTTKDGWVYYANHLEEKTQWEHPKS) folds into the WW 1 domain. The Nuclear localization signal signature appears at 50 to 55 (GKRKRV). The region spanning 57 to 90 (GGLPYGWEQETDENGQVYFVDHINKRTTYLDPRL) is the WW 2 domain. 131 to 137 (GANSGIG) lines the NADP(+) pocket. Residue Ser-260 coordinates substrate. Tyr-293 functions as the Proton acceptor in the catalytic mechanism.

The protein belongs to the short-chain dehydrogenases/reductases (SDR) family.

Its subcellular location is the cytoplasm. The protein localises to the mitochondrion. The protein resides in the golgi apparatus. It localises to the lysosome. Its function is as follows. Putative oxidoreductase. Acts as a tumor suppressor and plays a role in apoptosis. May function synergistically with p53/TP53 to control genotoxic stress-induced cell death. Plays a role in TGFB1 signaling and TGFB1-mediated cell death. May also play a role in tumor necrosis factor (TNF)-mediated cell death. Required for normal bone development. Inhibits Wnt signaling. The sequence is that of WW domain-containing oxidoreductase (WWOX) from Gallus gallus (Chicken).